A 78-amino-acid chain; its full sequence is Small ribosomal subunit protein bS18 (78 aa).

This sequence belongs to the bacterial ribosomal protein bS18 family. As to quaternary structure, part of the 30S ribosomal subunit. Forms a tight heterodimer with protein bS6.

Its function is as follows. Binds as a heterodimer with protein bS6 to the central domain of the 16S rRNA, where it helps stabilize the platform of the 30S subunit. This chain is Small ribosomal subunit protein bS18, found in Alkaliphilus oremlandii (strain OhILAs) (Clostridium oremlandii (strain OhILAs)).